We begin with the raw amino-acid sequence, 32 residues long: Corticostatin-related peptide RK-1 (32 aa).

3 disulfides stabilise this stretch: cysteine 3/cysteine 29, cysteine 5/cysteine 19, and cysteine 9/cysteine 28.

It localises to the secreted. In terms of biological role, has antimicrobial activity against E.coli and activates ion channel activity. This is Corticostatin-related peptide RK-1 from Oryctolagus cuniculus (Rabbit).